A 442-amino-acid polypeptide reads, in one-letter code: MDAWPRCLERLEAEFPPEDVHTWLKPLQAEDRGDSIVLYAPNAFIVDQVRERYLPRIRELLAYFAGNGEVALAVGSRPRAPEPAPAAAAVPSAPQAAPMVPFAGNLDSHYTFANFVEGRSNQLGLAAAIQAAQRPGDRAHNPLLLYGSTGLGKTHLMFAAGNALRQANPAAKVMYLRSEQFFSAMIRALQDKAMDQFKRQFQQIDALLIDDIQFFAGKDRTQEEFFHTFNALFDGRQQIILTCDRYPREVEGLEPRLKSRLAWGLSVAIDPPDFETRAAIVLAKARERGAEIPDDVAFLIAKKMRSNVRDLEGALNTLVARANFTGRSITVEFAQETLRDLLRAQQQAIGIPNIQKTVADYYGLQMKDLLSKRRTRSLARPRQVAMALAKELTEHSLPEIGDAFAGRDHTTVLHACRQIRTLMEADGKLREDWEKLIRKLSE.

Positions 1–75 are domain I, interacts with DnaA modulators; that stretch reads MDAWPRCLER…GNGEVALAVG (75 aa). A domain II region spans residues 75–104; that stretch reads GSRPRAPEPAPAAAAVPSAPQAAPMVPFAG. The domain III, AAA+ region stretch occupies residues 105–322; the sequence is NLDSHYTFAN…GALNTLVARA (218 aa). Residues Gly150, Gly152, Lys153, and Thr154 each coordinate ATP. Residues 323–442 are domain IV, binds dsDNA; the sequence is NFTGRSITVE…WEKLIRKLSE (120 aa).

The protein belongs to the DnaA family. As to quaternary structure, oligomerizes as a right-handed, spiral filament on DNA at oriC.

It localises to the cytoplasm. Its function is as follows. Plays an essential role in the initiation and regulation of chromosomal replication. ATP-DnaA binds to the origin of replication (oriC) to initiate formation of the DNA replication initiation complex once per cell cycle. Binds the DnaA box (a 9 base pair repeat at the origin) and separates the double-stranded (ds)DNA. Forms a right-handed helical filament on oriC DNA; dsDNA binds to the exterior of the filament while single-stranded (ss)DNA is stabiized in the filament's interior. The ATP-DnaA-oriC complex binds and stabilizes one strand of the AT-rich DNA unwinding element (DUE), permitting loading of DNA polymerase. After initiation quickly degrades to an ADP-DnaA complex that is not apt for DNA replication. Binds acidic phospholipids. This chain is Chromosomal replication initiator protein DnaA, found in Xanthomonas euvesicatoria pv. vesicatoria (strain 85-10) (Xanthomonas campestris pv. vesicatoria).